Here is a 63-residue protein sequence, read N- to C-terminus: Antimicrobial peptide 2 (63 aa).

A signal peptide spans 1 to 27 (MAKVPIAFLKFVIVLILFIAMSGMIEA). Disulfide bonds link Cys28–Cys45, Cys35–Cys49, and Cys44–Cys60.

Belongs to the AMP family. In terms of assembly, homodimer. Seed specific.

It is found in the secreted. Functionally, possesses antifungal activity and is also active on two tested Gram-positive bacteria but is non-toxic for Gram-negative bacteria and cultured human cells. This Mirabilis jalapa (Garden four-o'clock) protein is Antimicrobial peptide 2 (AMP2).